The following is a 110-amino-acid chain: UPF0122 protein lin1916 (110 aa).

The protein belongs to the UPF0122 family.

Might take part in the signal recognition particle (SRP) pathway. This is inferred from the conservation of its genetic proximity to ftsY/ffh. May be a regulatory protein. The polypeptide is UPF0122 protein lin1916 (Listeria innocua serovar 6a (strain ATCC BAA-680 / CLIP 11262)).